Consider the following 573-residue polypeptide: 2-isopropylmalate synthase (573 aa).

A Pyruvate carboxyltransferase domain is found at Pro37–Asp314. Mg(2+)-binding residues include Asp46, His253, His255, and Asn289. Positions Asn456 to Arg573 are regulatory domain.

This sequence belongs to the alpha-IPM synthase/homocitrate synthase family. LeuA type 2 subfamily. As to quaternary structure, homodimer. The cofactor is Mg(2+).

It localises to the cytoplasm. It carries out the reaction 3-methyl-2-oxobutanoate + acetyl-CoA + H2O = (2S)-2-isopropylmalate + CoA + H(+). Its pathway is amino-acid biosynthesis; L-leucine biosynthesis; L-leucine from 3-methyl-2-oxobutanoate: step 1/4. Catalyzes the condensation of the acetyl group of acetyl-CoA with 3-methyl-2-oxobutanoate (2-ketoisovalerate) to form 3-carboxy-3-hydroxy-4-methylpentanoate (2-isopropylmalate). This Streptomyces coelicolor (strain ATCC BAA-471 / A3(2) / M145) protein is 2-isopropylmalate synthase.